The following is a 317-amino-acid chain: 3'-5' exoribonuclease YhaM (317 aa).

Residues 17 to 90 constitute a DNA-binding region (OB); sequence FLLIKESTRG…QLKILSIRLS (74 aa). Positions 163-279 constitute an HD domain; that stretch reads HVVSMLAIGK…LHLIDLIDAK (117 aa).

The protein belongs to the YhaM family.

Functionally, shows a 3'-5' exoribonuclease activity. This is 3'-5' exoribonuclease YhaM from Oceanobacillus iheyensis (strain DSM 14371 / CIP 107618 / JCM 11309 / KCTC 3954 / HTE831).